The chain runs to 641 residues: SUMO-activating enzyme subunit 2-B (641 aa).

ATP is bound by residues 24–29 (GAGGIG), aspartate 48, 56–59 (NLNR), lysine 72, 95–96 (SI), and 117–122 (DNNAAR). Zn(2+) contacts are provided by cysteine 158 and cysteine 161. Cysteine 173 (glycyl thioester intermediate) is an active-site residue. Zn(2+) contacts are provided by cysteine 439 and cysteine 442. Residues 546–641 (GDVPEKGPQK…EEDDDIIALD (96 aa)) are disordered. Basic and acidic residues predominate over residues 548 to 561 (VPEKGPQKPPEESV). The segment covering 562–579 (KNITNGSDDGAQPSTSKA) has biased composition (polar residues). Acidic residues-rich tracts occupy residues 582–594 (QDDV…DEES) and 630–641 (PVEEDDDIIALD).

The protein belongs to the ubiquitin-activating E1 family. Heterodimer of sae1 and uba2/sae2. The heterodimer corresponds to the two domains that are encoded on a single polypeptide chain in ubiquitin-activating enzyme E1. Interacts with ube2i.

The protein resides in the nucleus. Its pathway is protein modification; protein sumoylation. Its function is as follows. The heterodimer acts as an E1 ligase for sumo1, sumo2, and sumo3. It mediates ATP-dependent activation of sumo proteins followed by formation of a thioester bond between a sumo protein and a conserved active site cysteine residue on uba2/sae2. The polypeptide is SUMO-activating enzyme subunit 2-B (uba2-b) (Xenopus laevis (African clawed frog)).